A 163-amino-acid polypeptide reads, in one-letter code: Ribosome maturation factor RimM (163 aa).

Positions 90-155 (VGEYYCKDLV…ADIDLNKKRL (66 aa)) constitute a PRC barrel domain.

It belongs to the RimM family. As to quaternary structure, binds ribosomal protein uS19.

It localises to the cytoplasm. In terms of biological role, an accessory protein needed during the final step in the assembly of 30S ribosomal subunit, possibly for assembly of the head region. Essential for efficient processing of 16S rRNA. May be needed both before and after RbfA during the maturation of 16S rRNA. It has affinity for free ribosomal 30S subunits but not for 70S ribosomes. The sequence is that of Ribosome maturation factor RimM from Neorickettsia sennetsu (strain ATCC VR-367 / Miyayama) (Ehrlichia sennetsu).